Reading from the N-terminus, the 204-residue chain is FMN-dependent NADH:quinone oxidoreductase (204 aa).

An FMN-binding site is contributed by S9.

It belongs to the azoreductase type 1 family. As to quaternary structure, homodimer. The cofactor is FMN.

It carries out the reaction 2 a quinone + NADH + H(+) = 2 a 1,4-benzosemiquinone + NAD(+). It catalyses the reaction N,N-dimethyl-1,4-phenylenediamine + anthranilate + 2 NAD(+) = 2-(4-dimethylaminophenyl)diazenylbenzoate + 2 NADH + 2 H(+). Its function is as follows. Quinone reductase that provides resistance to thiol-specific stress caused by electrophilic quinones. Also exhibits azoreductase activity. Catalyzes the reductive cleavage of the azo bond in aromatic azo compounds to the corresponding amines. This is FMN-dependent NADH:quinone oxidoreductase from Thiobacillus denitrificans (strain ATCC 25259 / T1).